The primary structure comprises 367 residues: Cobalt-precorrin-5B C(1)-methyltransferase (367 aa).

This sequence belongs to the CbiD family.

The catalysed reaction is Co-precorrin-5B + S-adenosyl-L-methionine = Co-precorrin-6A + S-adenosyl-L-homocysteine. It participates in cofactor biosynthesis; adenosylcobalamin biosynthesis; cob(II)yrinate a,c-diamide from sirohydrochlorin (anaerobic route): step 6/10. Its function is as follows. Catalyzes the methylation of C-1 in cobalt-precorrin-5B to form cobalt-precorrin-6A. The protein is Cobalt-precorrin-5B C(1)-methyltransferase of Leptospira interrogans serogroup Icterohaemorrhagiae serovar copenhageni (strain Fiocruz L1-130).